Reading from the N-terminus, the 358-residue chain is UPF0283 membrane protein PM0909 (358 aa).

Helical transmembrane passes span 62–82 (LALT…QWLV), 90–110 (WIYF…VSSL), and 213–233 (ALEA…MFFL).

Belongs to the UPF0283 family.

Its subcellular location is the cell inner membrane. This Pasteurella multocida (strain Pm70) protein is UPF0283 membrane protein PM0909.